We begin with the raw amino-acid sequence, 341 residues long: Mediator of RNA polymerase II transcription subunit 18 (341 aa).

The tract at residues 139 to 216 is disordered; the sequence is KVMDKEKVQS…KEHSEGNASQ (78 aa). Positions 163 to 211 are enriched in basic and acidic residues; it reads EDKKENIKKEESGEEVKGSGEEVKGSGEEVKGSGEEAKKSGEEAKEHSE.

This sequence belongs to the Mediator complex subunit 18 family. As to quaternary structure, component of the Mediator complex.

The protein localises to the nucleus. Functionally, component of the Mediator complex, a coactivator involved in the regulated transcription of nearly all RNA polymerase II-dependent genes. Mediator functions as a bridge to convey information from gene-specific regulatory proteins to the basal RNA polymerase II transcription machinery. Mediator is recruited to promoters by direct interactions with regulatory proteins and serves as a scaffold for the assembly of a functional preinitiation complex with RNA polymerase II and the general transcription factors. This is Mediator of RNA polymerase II transcription subunit 18 (SRB5) from Debaryomyces hansenii (strain ATCC 36239 / CBS 767 / BCRC 21394 / JCM 1990 / NBRC 0083 / IGC 2968) (Yeast).